The primary structure comprises 205 residues: MPVGLACNADDVLSIAVLCGGSSPEREVSLAGGKRIADALGRLGHRAAVVDLNRESAHQLLAMAPDLVYNALHGGQGEDGCASGLLDILGLAYTHSRVAASSVGMDKVLTKHVLKSLGIDFPEFSVLTKEEVLSAKEVMPYPFVIKPICGGSTIGVHAIFSRSEYLDLSVHADALEGRMLVEEYIPGQEVHTAVFLGRAIGTMEF.

An ATP-grasp domain is found at Lys111–Phe205. Met139–Val190 is an ATP binding site.

It belongs to the D-alanine--D-alanine ligase family. It depends on Mg(2+) as a cofactor. Mn(2+) serves as cofactor.

Its subcellular location is the cytoplasm. It carries out the reaction 2 D-alanine + ATP = D-alanyl-D-alanine + ADP + phosphate + H(+). The protein operates within cell wall biogenesis; peptidoglycan biosynthesis. Functionally, cell wall formation. In Anaplasma centrale, this protein is D-alanine--D-alanine ligase (ddl).